The sequence spans 325 residues: MKTRTLKVLKPTLALLLAASFSAGALAQEVTLRLVSAFPENGIYVQRLLPWIAKVNAEGKGVLQINFLGGPKAIPTFEAGNAVKTGVVDMAMNTGAFYTNVMPEADFLKLTQIPVAEQRKNGAFDAINKVWNEKGNTQYLARMVENQPFHIYTNKKIDKPDLSGQKIRISPVYRDFFQALNANVVTTPPGEVYTALERGVVDGYGWPIGGIFDLNWQEKTKFRVDPGFYDAEVSLTMNLPAYKKLTDAQRNYLQKQLLVLEAENTFWTRYGNVETARQETAGIQTIKFDAATSKAFREKAYEVGWAGAMKQSPEVAARFKTLFSK.

The N-terminal stretch at 1 to 27 (MKTRTLKVLKPTLALLLAASFSAGALA) is a signal peptide. 168 to 173 (RISPVY) is a phenylglyoxylate binding site.

This sequence belongs to the bacterial solute-binding protein 7 family. In terms of assembly, the complex is comprised of an extracytoplasmic solute-binding protein and a heteromeric permease formed by two transmembrane proteins.

It is found in the periplasm. In terms of biological role, solute-binding protein that binds phenylglyoxylate (in vitro). Probably part of a tripartite ATP-independent periplasmic (TRAP) transport system that mediates solute transport into the cytoplasm. The sequence is that of Solute-binding protein Bpro_4736 from Polaromonas sp. (strain JS666 / ATCC BAA-500).